We begin with the raw amino-acid sequence, 400 residues long: Tryptophan synthase beta chain (400 aa).

Position 92 is an N6-(pyridoxal phosphate)lysine (Lys92).

The protein belongs to the TrpB family. Tetramer of two alpha and two beta chains. The cofactor is pyridoxal 5'-phosphate.

The catalysed reaction is (1S,2R)-1-C-(indol-3-yl)glycerol 3-phosphate + L-serine = D-glyceraldehyde 3-phosphate + L-tryptophan + H2O. Its pathway is amino-acid biosynthesis; L-tryptophan biosynthesis; L-tryptophan from chorismate: step 5/5. Its function is as follows. The beta subunit is responsible for the synthesis of L-tryptophan from indole and L-serine. This is Tryptophan synthase beta chain from Neisseria gonorrhoeae.